Consider the following 934-residue polypeptide: MITGLLKKIFGSRNERLIKQYRRKVVQINALEPTFEALSDAELQAKTQAFRERFAKGETLDALLPEAFAVCREASKRVMKMRHFDVQLIGGMVLHDGKIAEMRTGEGKTLTATLAVYLNAIAGLGVHVVTVNDYLAQRDAEWMGKLYNWLGLSVGVNLTTMAHDEKQAAYAADITYGTNNEFGFDYLRDNMVYDDSQRVQRPLNYAIVDEVDSILIDEARTPLIISGQAEDHTDLYRRMNSIPPLLTRQIGEEKADGTGVEKPGDYYVDEKSHQVYLTEAGHEKAEQILLQAGLLAEGESLYAPQNITLMHHLYASLRAHSLFHRDQHYVVQGDEVIIVDEFTGRLMQGRRWSDGLHQAVEAKEGVQIQQENQTLATITFQNYFRMYAKLAGMTGTADTEAYEFQEIYGLETVVIPTNRQAQRKDLQDQIYKTSKERYDAVIRDIRDCFERGQPVLVGTTSIENSELLSHLLNQAQLPHQVLNAKQHAREAEIVAQAGRPKMVTIATNMAGRGTDIVLGGNVEKQAGFVMADESLSDEEKARRVTQLQDEWQSLHEQVKAAGGLHIVGTERHESRRIDNQLRGRAGRQGDPGSSRFYLSLDDQLLRIFAGDRVRAIMDRLKMPEGEPIEAGIVTRSIESAQRKVEGRNFDIRKQLLQYDDVANDQRREIYKLRNEILEAVDAGDLVKNLRESVFVELFRAYVPAESMEEQWDLAGLEKTLRDDWGVEVPLVKTVEQAQSIEDEELLTQVQEAVEAVYAGKVAQVGRESFAGFERSVMLQSLDTHWREHLAALDHLRQGIHLRGYAQKDPKQEYKRESFELFGRLLDNIRNEVTRIIFTVRIQSQAELEEASEQIEEDLSQLTNVQYKHDEFSELAEVAAGDAEIHGETPPVPAHRSAAASAAAALAGQVPKVGRNDPCPCGSGKKYKQCHGKLA.

ATP-binding positions include Gln-87, Gly-105–Thr-109, and Asp-515. Positions 918, 920, 929, and 930 each coordinate Zn(2+).

Belongs to the SecA family. Monomer and homodimer. Part of the essential Sec protein translocation apparatus which comprises SecA, SecYEG and auxiliary proteins SecDF-YajC and YidC. It depends on Zn(2+) as a cofactor.

The protein localises to the cell inner membrane. It localises to the cytoplasm. It catalyses the reaction ATP + H2O + cellular proteinSide 1 = ADP + phosphate + cellular proteinSide 2.. Its function is as follows. Part of the Sec protein translocase complex. Interacts with the SecYEG preprotein conducting channel. Has a central role in coupling the hydrolysis of ATP to the transfer of proteins into and across the cell membrane, serving both as a receptor for the preprotein-SecB complex and as an ATP-driven molecular motor driving the stepwise translocation of polypeptide chains across the membrane. The polypeptide is Protein translocase subunit SecA (Ralstonia nicotianae (strain ATCC BAA-1114 / GMI1000) (Ralstonia solanacearum)).